Here is a 258-residue protein sequence, read N- to C-terminus: Regulatory protein RecX (258 aa).

The protein belongs to the RecX family.

It localises to the cytoplasm. Its function is as follows. Modulates RecA activity. The protein is Regulatory protein RecX of Streptococcus thermophilus (strain CNRZ 1066).